We begin with the raw amino-acid sequence, 283 residues long: Alkaline ceramidase (283 aa).

Ca(2+) is bound by residues Asp28, Trp29, Glu31, Asn33, and Glu42. The next 2 helical transmembrane spans lie at 43–63 (FVNT…IMLF) and 69–89 (FVTP…LSSM). A Zn(2+)-binding site is contributed by His92. Transmembrane regions (helical) follow at residues 98 to 118 (IGQL…FSLF), 134 to 151 (TFSW…GLSW), 154 to 174 (PIVN…MLYT), and 187 to 209 (LGIR…RIFC). The Zn(2+) site is built by His221 and His225. Residues 222 to 242 (GFWHIFIFIAAYTVLVLFAYF) form a helical membrane-spanning segment.

Belongs to the alkaline ceramidase family. The cofactor is Zn(2+). In terms of tissue distribution, expressed in the central midgut of late embryos. In brain, it is present at the interhemispheric junction and in groups of cells in the central brain.

The protein resides in the membrane. It catalyses the reaction an N-acylsphing-4-enine + H2O = sphing-4-enine + a fatty acid. In terms of biological role, hydrolyzes the sphingolipid ceramide into sphingosine and free fatty acid. The protein is Alkaline ceramidase (bwa) of Drosophila melanogaster (Fruit fly).